The chain runs to 213 residues: Adenylate kinase (213 aa).

10 to 15 (GAGKGT) is a binding site for ATP. Positions 30 to 59 (STGDMFRAAIKEGTEMGKKAKEYMDKGALV) are NMP. Residues Thr31, Arg36, 57–59 (ALV), 85–88 (GFPR), and Gln92 each bind AMP. The LID stretch occupies residues 126–163 (GRRVCKNCGASYHVIFNPPQAEGKCNSCNGELYQRSDD). Arg127 contacts ATP. Residues Cys130 and Cys133 each coordinate Zn(2+). 136-137 (SY) is an ATP binding site. Zn(2+)-binding residues include Cys150 and Cys153. The AMP site is built by Arg160 and Arg171. Position 199 (Gln199) interacts with ATP.

This sequence belongs to the adenylate kinase family. As to quaternary structure, monomer.

It is found in the cytoplasm. The catalysed reaction is AMP + ATP = 2 ADP. It participates in purine metabolism; AMP biosynthesis via salvage pathway; AMP from ADP: step 1/1. Functionally, catalyzes the reversible transfer of the terminal phosphate group between ATP and AMP. Plays an important role in cellular energy homeostasis and in adenine nucleotide metabolism. This Desulforamulus reducens (strain ATCC BAA-1160 / DSM 100696 / MI-1) (Desulfotomaculum reducens) protein is Adenylate kinase.